A 190-amino-acid polypeptide reads, in one-letter code: dCTP deaminase (190 aa).

113 to 118 contributes to the dCTP binding site; the sequence is KSTYAR. The Proton donor/acceptor role is filled by Glu-139. Residues Gln-158, Tyr-172, Lys-181, and Gln-182 each contribute to the dCTP site.

It belongs to the dCTP deaminase family. As to quaternary structure, homotrimer.

It catalyses the reaction dCTP + H2O + H(+) = dUTP + NH4(+). It participates in pyrimidine metabolism; dUMP biosynthesis; dUMP from dCTP (dUTP route): step 1/2. Functionally, catalyzes the deamination of dCTP to dUTP. The sequence is that of dCTP deaminase from Chlamydia caviae (strain ATCC VR-813 / DSM 19441 / 03DC25 / GPIC) (Chlamydophila caviae).